A 173-amino-acid chain; its full sequence is Crossover junction endodeoxyribonuclease RuvC (173 aa).

Active-site residues include Asp8, Glu67, and Asp139. Residues Asp8, Glu67, and Asp139 each contribute to the Mg(2+) site.

It belongs to the RuvC family. As to quaternary structure, homodimer which binds Holliday junction (HJ) DNA. The HJ becomes 2-fold symmetrical on binding to RuvC with unstacked arms; it has a different conformation from HJ DNA in complex with RuvA. In the full resolvosome a probable DNA-RuvA(4)-RuvB(12)-RuvC(2) complex forms which resolves the HJ. Mg(2+) serves as cofactor.

Its subcellular location is the cytoplasm. The enzyme catalyses Endonucleolytic cleavage at a junction such as a reciprocal single-stranded crossover between two homologous DNA duplexes (Holliday junction).. Its function is as follows. The RuvA-RuvB-RuvC complex processes Holliday junction (HJ) DNA during genetic recombination and DNA repair. Endonuclease that resolves HJ intermediates. Cleaves cruciform DNA by making single-stranded nicks across the HJ at symmetrical positions within the homologous arms, yielding a 5'-phosphate and a 3'-hydroxyl group; requires a central core of homology in the junction. The consensus cleavage sequence is 5'-(A/T)TT(C/G)-3'. Cleavage occurs on the 3'-side of the TT dinucleotide at the point of strand exchange. HJ branch migration catalyzed by RuvA-RuvB allows RuvC to scan DNA until it finds its consensus sequence, where it cleaves and resolves the cruciform DNA. The chain is Crossover junction endodeoxyribonuclease RuvC from Shewanella sp. (strain ANA-3).